Here is a 398-residue protein sequence, read N- to C-terminus: Phospholipase C (398 aa).

The signal sequence occupies residues 1 to 28 (MKKKFLKGLCCAFVISITCLGASSKAYG). Zn(2+) is bound by residues tryptophan 29, histidine 39, aspartate 84, histidine 96, histidine 154, aspartate 158, histidine 164, histidine 176, and glutamate 180. Residues 29 to 278 (WDGKKDGTGT…YDVSKDLLPT (250 aa)) enclose the Zn-dependent PLC domain. The linker stretch occupies residues 275–283 (LLPTENHKI). A PLAT domain is found at 284 to 398 (NGLMVVIKTA…IHGNEKYYIN (115 aa)). Glycine 299, threonine 300, aspartate 301, aspartate 321, asparagine 322, glycine 324, asparagine 325, aspartate 326, and aspartate 364 together coordinate Ca(2+).

Belongs to the bacterial zinc-metallophospholipase C family. Requires Ca(2+) as cofactor. Zn(2+) serves as cofactor.

The protein localises to the secreted. It carries out the reaction a 1,2-diacyl-sn-glycero-3-phosphocholine + H2O = phosphocholine + a 1,2-diacyl-sn-glycerol + H(+). In terms of biological role, bacterial hemolysins are exotoxins that attack blood cell membranes and cause cell rupture. Binds to eukaryotic membranes where it hydrolyzes phosphatidylcholine, sphingomyelin and phosphatidylethanolamine. The diacylglycerol produced can activate both the arachidonic acid pathway, leading to modulation of the inflammatory response cascade and thrombosis, and protein kinase C, leading to activation of eukaryotic phospholipases and further membrane damage. This enzyme is hemolytic against horse erythrocytes. This chain is Phospholipase C (plc), found in Clostridium novyi.